Here is a 613-residue protein sequence, read N- to C-terminus: RUN domain-containing protein 1 (613 aa).

Positions 15–36 (AAVGPKAKDEEEEEEEPLPPCE) are disordered. A Phosphothreonine modification is found at Thr-54. The span at 57–69 (LEEATAEEPGAAP) shows a compositional bias: low complexity. Disordered stretches follow at residues 57-79 (LEEA…PGRT), 140-177 (YEGP…RLET), and 305-330 (GKTG…KAED). A phosphoserine mark is found at Ser-71 and Ser-75. The span at 159–177 (PWLRGEDQSEQEKQERLET) shows a compositional bias: basic and acidic residues. A coiled-coil region spans residues 160-235 (WLRGEDQSEQ…IKKLDMNLNE (76 aa)). The segment covering 309-325 (NGCSRTGSSRTPPGNSK) has biased composition (polar residues). The region spanning 421–602 (ELTMAVRKEL…LKFSLPVDLA (182 aa)) is the RUN domain. Ser-497 is subject to Phosphoserine.

May play a role as p53/TP53 inhibitor and thus may have oncogenic activity. The protein is RUN domain-containing protein 1 (RUNDC1) of Homo sapiens (Human).